Reading from the N-terminus, the 210-residue chain is Mating-type-like protein ALPHA2, silenced copy at MTL3 (210 aa).

The homeobox; TALE-type DNA-binding region spans A108 to Y170.

It belongs to the TALE/M-ATYP homeobox family.

Its subcellular location is the nucleus. Mating type proteins are sequence specific DNA-binding proteins that act as master switches in yeast differentiation by controlling gene expression in a cell type-specific fashion. This is Mating-type-like protein ALPHA2, silenced copy at MTL3 (MTL3alpha2) from Candida glabrata (strain ATCC 2001 / BCRC 20586 / JCM 3761 / NBRC 0622 / NRRL Y-65 / CBS 138) (Yeast).